A 555-amino-acid polypeptide reads, in one-letter code: Lysine--tRNA ligase (555 aa).

Positions 37–45 (TSGRLHVGN) match the 'HIGH' region motif. Positions 301 to 305 (AMSSS) match the 'KMSKS' region motif.

The protein belongs to the class-I aminoacyl-tRNA synthetase family.

The protein localises to the cytoplasm. The catalysed reaction is tRNA(Lys) + L-lysine + ATP = L-lysyl-tRNA(Lys) + AMP + diphosphate. This chain is Lysine--tRNA ligase, found in Methanopyrus kandleri (strain AV19 / DSM 6324 / JCM 9639 / NBRC 100938).